The primary structure comprises 512 residues: Metal transporter Nramp4 (512 aa).

Helical transmembrane passes span 52–72 (LWLF…PGNL), 80–100 (AIAG…GLLI), 129–149 (MVLW…EVIG), 161–181 (LVPL…FLFL), 189–209 (LEAV…WMFG), 235–255 (AVGI…SALV), 277–297 (IEST…TTVF), 323–343 (YGGG…AAGQ), 371–391 (ALIT…VFDS), 402–422 (WLNV…LCLV), 440–460 (ISWI…VDFF), and 468–488 (ILLV…LYLI).

The protein belongs to the NRAMP (TC 2.A.55) family. Expressed in vascular tissues.

The protein localises to the vacuole membrane. In terms of biological role, vacuolar metal transporter involved in intracellular metal homeostasis. Can transport iron (Fe), manganese (Mn) and cadmium (Cd). Regulates metal accumulation under Fe starvation. Acts redundantly with NRAMP3 to mobilize vacuolar Fe and provide sufficient Fe during seed germination. In association with NRAMP3, required for optimal growth and photosynthesis under Mn deficiency. Exports Mn from vacuoles in leaf mesophyll cells, making Mn available for functional photosystem II in chloroplasts. The polypeptide is Metal transporter Nramp4 (NRAMP4) (Arabidopsis thaliana (Mouse-ear cress)).